Reading from the N-terminus, the 89-residue chain is Phasin PhaP (89 aa).

Helix regions lie at residues 3–26 (TQFF…TWME) and 39–83 (DTFE…ALRQ).

As to quaternary structure, homotetramer.

It is found in the cellular thylakoid membrane. It localises to the cytoplasm. It functions in the pathway biopolymer metabolism; poly-(R)-3-hydroxybutanoate biosynthesis. Its function is as follows. A phasin, it attaches to the polyhydroxybutyrate (PHB) granule surface regulating the number and size of PHB granules within a cell. It probably also acts as a regulator affecting the biosynthetic activity of PHB synthase in vivo. The protein is Phasin PhaP of Synechocystis sp. (strain ATCC 27184 / PCC 6803 / Kazusa).